The following is a 181-amino-acid chain: Cytochrome b6-f complex iron-sulfur subunit (181 aa).

The interval 1–35 is disordered; that stretch reads MAQTGNFKSPARMSSLGQGAAPASAGAVTGGKPRE. The next 2 membrane-spanning stretches (helical) occupy residues 53–73 and 114–134; these read VGGV…RYIV and GGSL…VHWD. The Rieske domain occupies 85–178; that stretch reads LAVGPASDVP…VKIEDGKIVV (94 aa). [2Fe-2S] cluster-binding residues include cysteine 124, histidine 126, cysteine 142, and histidine 145. Cysteine 129 and cysteine 144 form a disulfide bridge.

This sequence belongs to the Rieske iron-sulfur protein family. [2Fe-2S] cluster is required as a cofactor.

The protein resides in the cell inner membrane. The catalysed reaction is 2 oxidized [plastocyanin] + a plastoquinol + 2 H(+)(in) = 2 reduced [plastocyanin] + a plastoquinone + 4 H(+)(out). Component of the green S-bacteria bc-complex which consists of the Rieske protein and cytochrome b subunit and which appears to lack a cytochrome c1-equivalent. This complex has a comparatively low redox potential. This chain is Cytochrome b6-f complex iron-sulfur subunit (petC), found in Chlorobaculum tepidum (strain ATCC 49652 / DSM 12025 / NBRC 103806 / TLS) (Chlorobium tepidum).